The sequence spans 310 residues: Isoflavone reductase homolog A622 (310 aa).

Residues 13–19 (GGTGYIG), arginine 38, and lysine 47 contribute to the NADP(+) site. Catalysis depends on lysine 135, which acts as the Proton acceptor. Residue arginine 139 participates in NADP(+) binding.

It belongs to the NmrA-type oxidoreductase family. Isoflavone reductase subfamily. In terms of assembly, monomer.

It is found in the cytoplasm. Its pathway is alkaloid biosynthesis; nicotine biosynthesis. NADPH-binding protein. Involved in the biosynthesis of pyridine alkaloid natural products, leading mainly to the production of anabasine, anatabine, nicotine and nornicotine, effective deterrents against herbivores with antiparasitic and pesticide properties (neurotoxins); nornicotine serves as the precursor in the synthesis of the carcinogen compound N'-nitrosonornicotine (NNN). Reductase involved in a late step of tobacco alkaloid biosynthesis. Triggers either the formation of a nicotinic acid-derived precursor or the final condensation reaction of tobacco alkaloids. The protein is Isoflavone reductase homolog A622 of Nicotiana glauca (Glaucous tobacco).